We begin with the raw amino-acid sequence, 271 residues long: 3-methyl-2-oxobutanoate hydroxymethyltransferase 1 (271 aa).

Residues aspartate 53 and aspartate 92 each coordinate Mg(2+). Residues 53 to 54 (DS), aspartate 92, and lysine 120 each bind 3-methyl-2-oxobutanoate. Mg(2+) is bound at residue glutamate 122. The active-site Proton acceptor is glutamate 189.

It belongs to the PanB family. As to quaternary structure, homodecamer; pentamer of dimers. The cofactor is Mg(2+).

It localises to the cytoplasm. It carries out the reaction 3-methyl-2-oxobutanoate + (6R)-5,10-methylene-5,6,7,8-tetrahydrofolate + H2O = 2-dehydropantoate + (6S)-5,6,7,8-tetrahydrofolate. Its pathway is cofactor biosynthesis; (R)-pantothenate biosynthesis; (R)-pantoate from 3-methyl-2-oxobutanoate: step 1/2. Its function is as follows. Catalyzes the reversible reaction in which hydroxymethyl group from 5,10-methylenetetrahydrofolate is transferred onto alpha-ketoisovalerate to form ketopantoate. This is 3-methyl-2-oxobutanoate hydroxymethyltransferase 1 from Burkholderia ambifaria (strain ATCC BAA-244 / DSM 16087 / CCUG 44356 / LMG 19182 / AMMD) (Burkholderia cepacia (strain AMMD)).